A 174-amino-acid polypeptide reads, in one-letter code: Probable E3 ubiquitin-protein ligase RHA4A (174 aa).

The segment at 105–147 (CCVCLGEFELKEELVEMPLCKHIFHLDCIHLWLYSHNTCPLCR) adopts an RING-type; atypical zinc-finger fold. The tract at residues 155–174 (TKTSVDDDNDHPDSPQTSPV) is disordered.

Expressed in stems, flowers, cauline leaves and roots.

It carries out the reaction S-ubiquitinyl-[E2 ubiquitin-conjugating enzyme]-L-cysteine + [acceptor protein]-L-lysine = [E2 ubiquitin-conjugating enzyme]-L-cysteine + N(6)-ubiquitinyl-[acceptor protein]-L-lysine.. Its pathway is protein modification; protein ubiquitination. Functionally, probable E3 ubiquitin-protein ligase that may possess E3 ubiquitin ligase activity in vitro. This Arabidopsis thaliana (Mouse-ear cress) protein is Probable E3 ubiquitin-protein ligase RHA4A.